A 432-amino-acid chain; its full sequence is Adenylosuccinate synthetase (432 aa).

Residues 12-18 and 40-42 each bind GTP; these read GDEGKGK and GHT. Residue aspartate 13 is the Proton acceptor of the active site. 2 residues coordinate Mg(2+): aspartate 13 and glycine 40. IMP contacts are provided by residues 13–16, 38–41, threonine 131, arginine 145, glutamine 226, threonine 241, and arginine 305; these read DEGK and NAGH. The active-site Proton donor is histidine 41. 301 to 307 serves as a coordination point for substrate; that stretch reads ATTGRPR. Residues arginine 307, 333–335, and 415–417 each bind GTP; these read KLD and STG.

This sequence belongs to the adenylosuccinate synthetase family. Homodimer. It depends on Mg(2+) as a cofactor.

It localises to the cytoplasm. The catalysed reaction is IMP + L-aspartate + GTP = N(6)-(1,2-dicarboxyethyl)-AMP + GDP + phosphate + 2 H(+). It functions in the pathway purine metabolism; AMP biosynthesis via de novo pathway; AMP from IMP: step 1/2. Its function is as follows. Plays an important role in the de novo pathway of purine nucleotide biosynthesis. Catalyzes the first committed step in the biosynthesis of AMP from IMP. The polypeptide is Adenylosuccinate synthetase (Magnetococcus marinus (strain ATCC BAA-1437 / JCM 17883 / MC-1)).